Reading from the N-terminus, the 409-residue chain is Argininosuccinate synthase (409 aa).

Residues 15–23 (AYSGGLDTS) and alanine 42 each bind ATP. Tyrosine 93 and serine 98 together coordinate L-citrulline. Glycine 123 lines the ATP pocket. The L-aspartate site is built by threonine 125, asparagine 129, and aspartate 130. Asparagine 129 lines the L-citrulline pocket. 5 residues coordinate L-citrulline: arginine 133, serine 182, serine 191, glutamate 267, and tyrosine 279.

This sequence belongs to the argininosuccinate synthase family. Type 1 subfamily. As to quaternary structure, homotetramer.

It localises to the cytoplasm. It catalyses the reaction L-citrulline + L-aspartate + ATP = 2-(N(omega)-L-arginino)succinate + AMP + diphosphate + H(+). The protein operates within amino-acid biosynthesis; L-arginine biosynthesis; L-arginine from L-ornithine and carbamoyl phosphate: step 2/3. The sequence is that of Argininosuccinate synthase from Desulfitobacterium hafniense (strain Y51).